Here is a 229-residue protein sequence, read N- to C-terminus: Non-structural protein V (229 aa).

2 stretches are compositionally biased toward polar residues: residues 30 to 46 (ATSQ…SSRT) and 82 to 112 (GRQN…LPSP). The segment at 30–112 (ATSQSSLNKP…MGSDTQLPSP (83 aa)) is disordered. Residues histidine 178, cysteine 197, cysteine 201, cysteine 213, cysteine 215, cysteine 218, cysteine 222, and cysteine 225 each contribute to the Zn(2+) site.

This sequence belongs to the paramyxoviruses V protein family.

Blocks host interferon signaling. This is Non-structural protein V (P/V) from Homo sapiens (Human).